The chain runs to 122 residues: uncharacterized protein (122 aa).

3 consecutive transmembrane segments (helical) span residues 21-40, 57-77, and 94-114; these read VWSW…SIAI, YTHM…CICI, and LLFS…YCIY.

Its subcellular location is the membrane. This is an uncharacterized protein from Saccharomyces cerevisiae (strain ATCC 204508 / S288c) (Baker's yeast).